Consider the following 217-residue polypeptide: Oxygen-evolving enhancer protein 3-1, chloroplastic (217 aa).

The N-terminal 68 residues, 1–68 (MAQAMASMTG…GGALSQAARA (68 aa)), are a transit peptide targeting the chloroplast.

Belongs to the PsbQ family.

The protein resides in the plastid. It is found in the chloroplast thylakoid membrane. The polypeptide is Oxygen-evolving enhancer protein 3-1, chloroplastic (PSBQ1) (Zea mays (Maize)).